A 911-amino-acid polypeptide reads, in one-letter code: FIGNL1-interacting regulator of recombination and mitosis (911 aa).

Residues 830-853 (SEKSQPAQTPLTEEPCAKRARQET) form a disordered region. The segment covering 844-853 (PCAKRARQET) has biased composition (basic and acidic residues).

The protein resides in the chromosome. It localises to the centromere. The protein localises to the kinetochore. Its subcellular location is the nucleus. It is found in the midbody. The protein resides in the cytoplasm. It localises to the cytoskeleton. The protein localises to the spindle. May play a role in chromosome segregation. The sequence is that of FIGNL1-interacting regulator of recombination and mitosis from Danio rerio (Zebrafish).